The sequence spans 487 residues: Cytochrome P450 2C16 (487 aa).

Residue Cys432 participates in heme binding.

This sequence belongs to the cytochrome P450 family. Heme serves as cofactor. Expressed constitutively in liver, lung, testes, and kidney.

It localises to the endoplasmic reticulum membrane. It is found in the microsome membrane. It carries out the reaction an organic molecule + reduced [NADPH--hemoprotein reductase] + O2 = an alcohol + oxidized [NADPH--hemoprotein reductase] + H2O + H(+). In terms of biological role, cytochromes P450 are a group of heme-thiolate monooxygenases. In liver microsomes, this enzyme is involved in an NADPH-dependent electron transport pathway. It oxidizes a variety of structurally unrelated compounds, including steroids, fatty acids, and xenobiotics. The sequence is that of Cytochrome P450 2C16 (CYP2C16) from Oryctolagus cuniculus (Rabbit).